Here is a 434-residue protein sequence, read N- to C-terminus: Perilipin-3 (434 aa).

A disordered region spans residues 1–22; sequence MSADGAEADGSTQVTVEEPVQQ. N-acetylserine is present on Ser-2. Ser-31 is modified (phosphoserine). An N6-acetyllysine modification is found at Lys-65. Ser-91 is modified (phosphoserine). Lys-122 participates in a covalent cross-link: Glycyl lysine isopeptide (Lys-Gly) (interchain with G-Cter in SUMO1). Phosphoserine occurs at positions 130 and 148. Thr-170 bears the Phosphothreonine mark. Phosphoserine occurs at positions 175 and 179. Phosphothreonine is present on Thr-216. Residues Ser-217 and Ser-241 each carry the phosphoserine modification. Tyr-251 bears the Phosphotyrosine mark. Coiled-coil stretches lie at residues 252 to 280 and 353 to 377; these read EHSLGKLRATKQRAQEALLQLSQALSLME and TNVKDQVQQARRQVEDLQATFSSIH.

Belongs to the perilipin family. Homooligomer. Interacts with M6PR (via the cytoplasmic domain). Interacts with IGF2R (via the cytoplasmic domain). In terms of processing, phosphorylation at Tyr-251 by isoform 1 of CHKA (CHKalpha2) promotes dissociation from lipid droplets: dissociation is followed by recruitment of autophagosome machinery to lipid droplets and subsequent lipid droplet lipolysis.

It is found in the lipid droplet. It localises to the endosome membrane. The protein localises to the cytoplasm. Functionally, structural component of lipid droplets, which is required for the formation and maintenance of lipid storage droplets. Required for the transport of mannose 6-phosphate receptors (MPR) from endosomes to the trans-Golgi network. This Pongo abelii (Sumatran orangutan) protein is Perilipin-3 (PLIN3).